A 361-amino-acid chain; its full sequence is MAKLPKITSLLPHSRVVSGIQPTGIPHIGNYLGSLKQWVQLQEEAARTPFSKCFFFVADLHALTVPQDPLKFRQARLDMLAALLAIGINPQKSTLFFQSDVAQHSELAWLLACSTSMGQLNRMTQWKSKLHLHDHDDLSFLDASATSSTRFNLGLFSYPVLQAADILLYGATHIPVGKDQSQHVELTRSIARSFNSSYKEKILTVPDIILNSSSSIMALCQPEKKMSKSDINSKNYILLSDSTGEIRKKISRAQTDNIKGITYGDSNRPGINNLINIFAAISDSTPSDIAQANASCSNAEFKEKVSSAIIRCLQPISTSFNEWRQNRELLRDIAKKGAEEAVAEASSCMHKLKTLTGLSVY.

Residues 1–16 constitute a mitochondrion transit peptide; that stretch reads MAKLPKITSLLPHSRV. Residues Gln-21 and 27 to 30 contribute to the ATP site; that span reads HIGN. The 'HIGH' region signature appears at 22-30; sequence PTGIPHIGN. Residue Asp-165 participates in L-tryptophan binding. Residues 177-179, 225-229, and Lys-228 each bind ATP; these read GKD and KMSKS. The short motif at 225-229 is the 'KMSKS' region element; sequence KMSKS.

Belongs to the class-I aminoacyl-tRNA synthetase family. In terms of assembly, homodimer.

It is found in the mitochondrion matrix. The enzyme catalyses tRNA(Trp) + L-tryptophan + ATP = L-tryptophyl-tRNA(Trp) + AMP + diphosphate + H(+). This is Tryptophan--tRNA ligase, mitochondrial from Schizosaccharomyces pombe (strain 972 / ATCC 24843) (Fission yeast).